A 183-amino-acid chain; its full sequence is Large ribosomal subunit protein uL5 (183 aa).

This sequence belongs to the universal ribosomal protein uL5 family. In terms of assembly, part of the 50S ribosomal subunit; part of the 5S rRNA/L5/L18/L25 subcomplex. Contacts the 5S rRNA and the P site tRNA. Forms a bridge to the 30S subunit in the 70S ribosome.

Functionally, this is one of the proteins that bind and probably mediate the attachment of the 5S RNA into the large ribosomal subunit, where it forms part of the central protuberance. In the 70S ribosome it contacts protein S13 of the 30S subunit (bridge B1b), connecting the 2 subunits; this bridge is implicated in subunit movement. Contacts the P site tRNA; the 5S rRNA and some of its associated proteins might help stabilize positioning of ribosome-bound tRNAs. The sequence is that of Large ribosomal subunit protein uL5 from Flavobacterium johnsoniae (strain ATCC 17061 / DSM 2064 / JCM 8514 / BCRC 14874 / CCUG 350202 / NBRC 14942 / NCIMB 11054 / UW101) (Cytophaga johnsonae).